We begin with the raw amino-acid sequence, 391 residues long: MSRFLICSFALVLLYPAGIDMYLVGLPRIAADLNASEAQLHIAFSVYLAGMAAAMLFAGKVADRSGRKPVAIPGAALFIITSVFCSLAETSTLFLAGRFLQGLGAGCCYVVAFAILRDTLDDRRRAKVLSLLNGITCIIPVLAPVLGHLIMLKFPWQSLFWTMAIMGIAVLMLSLFILKETRPAAPAASDKSRENSESLLNRFFLSRVVITTLSVSVILTFVNTSPVLLMEIMGFERGEYATIMALTAGVSMTVSFSTPFALGIFKPRTLMITSQVLFLAAGITLTVSPSHAVSLFGITLICAGFSVGFGVAMSQALGPFSLRAGVASSTLGIAQVCGSSLWIWLAAVVGISAWNMLIGILIACSIVSLLLIMFVAPGRPVTAHEEIHHHA.

Topologically, residues 1-3 (MSR) are cytoplasmic. Residues 4 to 24 (FLICSFALVLLYPAGIDMYLV) traverse the membrane as a helical segment. Over 25–41 (GLPRIAADLNASEAQLH) the chain is Periplasmic. The helical transmembrane segment at 42 to 62 (IAFSVYLAGMAAAMLFAGKVA) threads the bilayer. Over 63-68 (DRSGRK) the chain is Cytoplasmic. A helical membrane pass occupies residues 69–89 (PVAIPGAALFIITSVFCSLAE). The Periplasmic segment spans residues 90–92 (TST). The helical transmembrane segment at 93 to 113 (LFLAGRFLQGLGAGCCYVVAF) threads the bilayer. At 114–130 (AILRDTLDDRRRAKVLS) the chain is on the cytoplasmic side. Residues 131 to 151 (LLNGITCIIPVLAPVLGHLIM) traverse the membrane as a helical segment. Residues 152–157 (LKFPWQ) are Periplasmic-facing. A helical membrane pass occupies residues 158–178 (SLFWTMAIMGIAVLMLSLFIL). Residues 179–198 (KETRPAAPAASDKSRENSES) are Cytoplasmic-facing. The chain crosses the membrane as a helical span at residues 199–221 (LLNRFFLSRVVITTLSVSVILTF). Residues 222–244 (VNTSPVLLMEIMGFERGEYATIM) lie on the Periplasmic side of the membrane. Residues 245–265 (ALTAGVSMTVSFSTPFALGIF) form a helical membrane-spanning segment. Residues 266–268 (KPR) lie on the Cytoplasmic side of the membrane. A helical transmembrane segment spans residues 269 to 289 (TLMITSQVLFLAAGITLTVSP). The Periplasmic portion of the chain corresponds to 290-292 (SHA). Residues 293-313 (VSLFGITLICAGFSVGFGVAM) traverse the membrane as a helical segment. Topologically, residues 314–330 (SQALGPFSLRAGVASST) are cytoplasmic. Residues 331–351 (LGIAQVCGSSLWIWLAAVVGI) traverse the membrane as a helical segment. Topologically, residues 352-355 (SAWN) are periplasmic. The chain crosses the membrane as a helical span at residues 356–376 (MLIGILIACSIVSLLLIMFVA). Residues 377–391 (PGRPVTAHEEIHHHA) are Cytoplasmic-facing.

It belongs to the major facilitator superfamily. DHA1 family. MdtL (TC 2.A.1.2.22) subfamily.

It is found in the cell inner membrane. Its function is as follows. Confers resistance to chloramphenicol. In Escherichia coli O157:H7, this protein is Multidrug resistance protein MdtL (mdtL).